We begin with the raw amino-acid sequence, 111 residues long: Cytochrome c (111 aa).

Position 1 is an N-acetylalanine (Ala1). Cys22, Cys25, and His26 together coordinate heme c. Residue Lys80 is modified to N6,N6,N6-trimethyllysine. Met88 contributes to the heme c binding site. An N6,N6,N6-trimethyllysine modification is found at Lys94.

Belongs to the cytochrome c family. In terms of processing, binds 1 heme c group covalently per subunit.

It localises to the mitochondrion intermembrane space. In terms of biological role, electron carrier protein. The oxidized form of the cytochrome c heme group can accept an electron from the heme group of the cytochrome c1 subunit of cytochrome reductase. Cytochrome c then transfers this electron to the cytochrome oxidase complex, the final protein carrier in the mitochondrial electron-transport chain. The chain is Cytochrome c from Cucurbita maxima (Pumpkin).